The following is a 345-amino-acid chain: Twinfilin (345 aa).

ADF-H domains lie at 4–139 and 177–312; these read QTGI…KHKR and GISC…DELH. Residues 320-345 form a disordered region; the sequence is PAFAKPKGPPNRGAKRLTRPSNEDQV.

It belongs to the actin-binding proteins ADF family. Twinfilin subfamily. In terms of assembly, interacts with G-actin; ADP-actin form.

It is found in the cytoplasm. The protein resides in the cytoskeleton. Its subcellular location is the cell cortex. Actin-binding protein involved in motile and morphological processes. Inhibits actin polymerization, likely by sequestering G-actin. This chain is Twinfilin (twf), found in Drosophila pseudoobscura pseudoobscura (Fruit fly).